Consider the following 540-residue polypeptide: GMP synthase [glutamine-hydrolyzing] (540 aa).

In terms of domain architecture, Glutamine amidotransferase type-1 spans 26–216 (IIIILDFGSQ…VYHICECEPT (191 aa)). Cysteine 103 serves as the catalytic Nucleophile. Catalysis depends on residues histidine 190 and glutamate 192. The 199-residue stretch at 217–415 (WTTAAFVEEA…VGLPEEIVQR (199 aa)) folds into the GMPS ATP-PPase domain. 244-250 (SGGVDSS) serves as a coordination point for ATP.

In terms of assembly, homodimer.

It carries out the reaction XMP + L-glutamine + ATP + H2O = GMP + L-glutamate + AMP + diphosphate + 2 H(+). It participates in purine metabolism; GMP biosynthesis; GMP from XMP (L-Gln route): step 1/1. Functionally, catalyzes the synthesis of GMP from XMP. The protein is GMP synthase [glutamine-hydrolyzing] of Trichormus variabilis (strain ATCC 29413 / PCC 7937) (Anabaena variabilis).